A 531-amino-acid polypeptide reads, in one-letter code: Tryptophan 6-halogenase ThaL (531 aa).

The FAD site is built by Gly-13, Thr-15, Ala-16, Ala-39, Ile-42, Ile-45, Val-47, and Ala-50. The active site involves Lys-79. Pro-111 provides a ligand contact to L-tryptophan. Met-198 and Leu-349 together coordinate FAD. Positions 360 and 361 each coordinate chloride. Ile-362 provides a ligand contact to FAD. Residues Tyr-454, Tyr-455, Glu-461, and Phe-465 each contribute to the L-tryptophan site.

This sequence belongs to the flavin-dependent halogenase family. Bacterial tryptophan halogenase subfamily. As to quaternary structure, homodimer. Monomer in solution.

The enzyme catalyses L-tryptophan + FADH2 + chloride + O2 = 6-chloro-L-tryptophan + FAD + 2 H2O. It catalyses the reaction D-tryptophan + FADH2 + chloride + O2 = 6-chloro-D-tryptophan + FAD + 2 H2O. Its function is as follows. Involved in the biosynthesis of thienodolin, a plant growth-regulating compound. Catalyzes the chlorination of tryptophan (Trp) at C6 position to yield 6-chloro-tryptophan. It is also able to use bromide ions to generate monobrominated Trp. In vitro, accepts a wide range of amides and peptides carrying either L- or D-Trp at the N-terminus. The sequence is that of Tryptophan 6-halogenase ThaL from Streptomyces albogriseolus.